Consider the following 414-residue polypeptide: Na(+)-translocating NADH-quinone reductase subunit B (414 aa).

3 consecutive transmembrane segments (helical) span residues 56 to 76 (IMIMVWFAVFPAMFWGMYNAG), 129 to 149 (FLPIYATVFLVGGFWEVLFCM), and 164 to 184 (ILFALIVPPTLPLWQAALGIT). Position 236 is an FMN phosphoryl threonine (T236). 5 consecutive transmembrane segments (helical) span residues 268–288 (IPGSIGEVSTLALMIGAAMIV), 297–317 (IIAGVMIGMIAVSTLFNVIGS), 325–345 (MPWHWHLVLGGFAFGMFFMAT), 358–378 (WWYGILIGAMCVMIRVVNPAY), and 381–401 (GMMLAILFANLFAPLFDHVVI).

Belongs to the NqrB/RnfD family. Composed of six subunits; NqrA, NqrB, NqrC, NqrD, NqrE and NqrF. The cofactor is FMN.

Its subcellular location is the cell inner membrane. It carries out the reaction a ubiquinone + n Na(+)(in) + NADH + H(+) = a ubiquinol + n Na(+)(out) + NAD(+). Its activity is regulated as follows. This reaction is tightly coupled to the Na(+) pumping activity and specifically requires Na(+) for activity. Inhibited by korormicin and 2-N-heptyl-4-hydroxyquinoline N-oxide (HQNO). Functionally, NQR complex catalyzes the reduction of ubiquinone-1 to ubiquinol by two successive reactions, coupled with the transport of Na(+) ions from the cytoplasm to the periplasm. NqrA to NqrE are probably involved in the second step, the conversion of ubisemiquinone to ubiquinol. The polypeptide is Na(+)-translocating NADH-quinone reductase subunit B (Vibrio alginolyticus).